The following is a 452-amino-acid chain: Isocitrate dehydrogenase [NADP], mitochondrial (452 aa).

A mitochondrion-targeting transit peptide spans 1-39; sequence MAGYLRAVSSLCRASGSTRTWAPAALNVPSWPEQPRRHY. 4 positions are modified to N6-acetyllysine: K45, K48, K67, and K69. N6-acetyllysine; alternate is present on residues K80 and K106. An N6-succinyllysine; alternate mark is found at K80 and K106. NADP(+) contacts are provided by residues 115 to 117 and R122; that span reads TIT. Position 117 (T117) interacts with D-threo-isocitrate. D-threo-isocitrate is bound by residues 134-140 and R149; that span reads SPNGTIR. K155 carries the N6-acetyllysine modification. K166 carries the N6-acetyllysine; alternate modification. At K166 the chain carries N6-succinyllysine; alternate. R172 lines the D-threo-isocitrate pocket. An N6-acetyllysine; alternate mark is found at K180 and K193. N6-succinyllysine; alternate is present on residues K180 and K193. K199 carries the post-translational modification N6-acetyllysine. K256 is modified (N6-acetyllysine; alternate). N6-succinyllysine; alternate is present on K256. An N6-acetyllysine mark is found at K263, K272, K275, and K280. K282 bears the N6-acetyllysine; alternate mark. K282 is modified (N6-succinyllysine; alternate). D291 lines the Mn(2+) pocket. Residue K299 coordinates NADP(+). Position 314 (D314) interacts with Mn(2+). NADP(+) contacts are provided by residues 349 to 354 and N367; that span reads GTVTRH. The residue at position 384 (K384) is an N6-acetyllysine; alternate. At K384 the chain carries N6-succinyllysine; alternate. N6-acetyllysine is present on residues K400, K413, and K442.

The protein belongs to the isocitrate and isopropylmalate dehydrogenases family. As to quaternary structure, homodimer. Mg(2+) is required as a cofactor. The cofactor is Mn(2+). Acetylation at Lys-413 dramatically reduces catalytic activity. Deacetylated by SIRT3.

It localises to the mitochondrion. The enzyme catalyses D-threo-isocitrate + NADP(+) = 2-oxoglutarate + CO2 + NADPH. In terms of biological role, plays a role in intermediary metabolism and energy production. It may tightly associate or interact with the pyruvate dehydrogenase complex. The chain is Isocitrate dehydrogenase [NADP], mitochondrial (Idh2) from Rattus norvegicus (Rat).